The following is a 418-amino-acid chain: Serine hydroxymethyltransferase (418 aa).

(6S)-5,6,7,8-tetrahydrofolate-binding positions include Leu120 and 124–126; that span reads GHL. Lys229 is modified (N6-(pyridoxal phosphate)lysine). 353–355 contacts (6S)-5,6,7,8-tetrahydrofolate; sequence SPF.

This sequence belongs to the SHMT family. As to quaternary structure, homodimer. The cofactor is pyridoxal 5'-phosphate.

It is found in the cytoplasm. It carries out the reaction (6R)-5,10-methylene-5,6,7,8-tetrahydrofolate + glycine + H2O = (6S)-5,6,7,8-tetrahydrofolate + L-serine. The protein operates within one-carbon metabolism; tetrahydrofolate interconversion. It functions in the pathway amino-acid biosynthesis; glycine biosynthesis; glycine from L-serine: step 1/1. Catalyzes the reversible interconversion of serine and glycine with tetrahydrofolate (THF) serving as the one-carbon carrier. This reaction serves as the major source of one-carbon groups required for the biosynthesis of purines, thymidylate, methionine, and other important biomolecules. Also exhibits THF-independent aldolase activity toward beta-hydroxyamino acids, producing glycine and aldehydes, via a retro-aldol mechanism. This is Serine hydroxymethyltransferase from Psychrobacter arcticus (strain DSM 17307 / VKM B-2377 / 273-4).